The sequence spans 855 residues: DNA mismatch repair protein MutS (855 aa).

An ATP-binding site is contributed by 613 to 620 (GPNMGGKS).

Belongs to the DNA mismatch repair MutS family.

Its function is as follows. This protein is involved in the repair of mismatches in DNA. It is possible that it carries out the mismatch recognition step. This protein has a weak ATPase activity. This chain is DNA mismatch repair protein MutS, found in Azotobacter vinelandii (strain DJ / ATCC BAA-1303).